The following is a 175-amino-acid chain: Centrosomal protein 20 (175 aa).

Positions 1–104 (MATIAELKAV…IVEDANGKSV (104 aa)) are necessary and sufficient for homooligomerization and localization to centrosomes and pericentriolar satellites. The region spanning 49 to 81 (ENLLINELIREYLEFNKYKYSASVLTAEAGQPE) is the LisH domain. The tract at residues 137 to 166 (RQNLAKPSTERNQKDRIPEPGRMAGTSIEE) is disordered. The span at 144–155 (STERNQKDRIPE) shows a compositional bias: basic and acidic residues.

This sequence belongs to the CEP43 family. Homooligomer; probably required for localization to centrosomes.

Its subcellular location is the cell projection. The protein resides in the cilium. The protein localises to the cytoplasm. It localises to the cytoskeleton. It is found in the cilium basal body. Its subcellular location is the microtubule organizing center. The protein resides in the centrosome. The protein localises to the cytoplasmic granule. It localises to the centriolar satellite. In terms of biological role, involved in the biogenesis of cilia. Required for the recruitment of PLK1 to centrosomes and S phase progression. The sequence is that of Centrosomal protein 20 (CEP20) from Gallus gallus (Chicken).